We begin with the raw amino-acid sequence, 688 residues long: Elongation factor G (688 aa).

Residues 8-282 (EKTRNIGIIA…AVVDYLPAPC (275 aa)) form the tr-type G domain. GTP contacts are provided by residues 17–24 (AHIDAGKT), 81–85 (DTPGH), and 135–138 (NKMD).

This sequence belongs to the TRAFAC class translation factor GTPase superfamily. Classic translation factor GTPase family. EF-G/EF-2 subfamily.

Its subcellular location is the cytoplasm. Functionally, catalyzes the GTP-dependent ribosomal translocation step during translation elongation. During this step, the ribosome changes from the pre-translocational (PRE) to the post-translocational (POST) state as the newly formed A-site-bound peptidyl-tRNA and P-site-bound deacylated tRNA move to the P and E sites, respectively. Catalyzes the coordinated movement of the two tRNA molecules, the mRNA and conformational changes in the ribosome. This is Elongation factor G from Aster yellows witches'-broom phytoplasma (strain AYWB).